Here is a 463-residue protein sequence, read N- to C-terminus: Exodeoxyribonuclease 7 large subunit (463 aa).

The protein belongs to the XseA family. As to quaternary structure, heterooligomer composed of large and small subunits.

Its subcellular location is the cytoplasm. The enzyme catalyses Exonucleolytic cleavage in either 5'- to 3'- or 3'- to 5'-direction to yield nucleoside 5'-phosphates.. Functionally, bidirectionally degrades single-stranded DNA into large acid-insoluble oligonucleotides, which are then degraded further into small acid-soluble oligonucleotides. In Klebsiella pneumoniae subsp. pneumoniae (strain ATCC 700721 / MGH 78578), this protein is Exodeoxyribonuclease 7 large subunit.